The sequence spans 333 residues: Beta-ketoacyl-[acyl-carrier-protein] synthase III (333 aa).

Active-site residues include Cys-116 and His-258. The segment at 259 to 263 (QANQR) is ACP-binding. Asn-288 is a catalytic residue.

The protein belongs to the thiolase-like superfamily. FabH family. As to quaternary structure, homodimer.

Its subcellular location is the cytoplasm. It catalyses the reaction malonyl-[ACP] + acetyl-CoA + H(+) = 3-oxobutanoyl-[ACP] + CO2 + CoA. It functions in the pathway lipid metabolism; fatty acid biosynthesis. Catalyzes the condensation reaction of fatty acid synthesis by the addition to an acyl acceptor of two carbons from malonyl-ACP. Catalyzes the first condensation reaction which initiates fatty acid synthesis and may therefore play a role in governing the total rate of fatty acid production. Possesses both acetoacetyl-ACP synthase and acetyl transacylase activities. Its substrate specificity determines the biosynthesis of branched-chain and/or straight-chain of fatty acids. This Microcystis aeruginosa (strain NIES-843 / IAM M-2473) protein is Beta-ketoacyl-[acyl-carrier-protein] synthase III.